Here is a 546-residue protein sequence, read N- to C-terminus: 2-isopropylmalate synthase (546 aa).

The Pyruvate carboxyltransferase domain occupies 8–271 (ILIFDTTLRD…NSFFKRNPDS (264 aa)). Asp17, His208, His210, and Asn244 together coordinate Mn(2+). Residues 408 to 546 (QLSLVQVSCG…TNTFLSNNAN (139 aa)) form a regulatory domain region.

This sequence belongs to the alpha-IPM synthase/homocitrate synthase family. LeuA type 1 subfamily. Homodimer. Mn(2+) serves as cofactor.

The protein localises to the cytoplasm. It catalyses the reaction 3-methyl-2-oxobutanoate + acetyl-CoA + H2O = (2S)-2-isopropylmalate + CoA + H(+). It functions in the pathway amino-acid biosynthesis; L-leucine biosynthesis; L-leucine from 3-methyl-2-oxobutanoate: step 1/4. Its function is as follows. Catalyzes the condensation of the acetyl group of acetyl-CoA with 3-methyl-2-oxobutanoate (2-ketoisovalerate) to form 3-carboxy-3-hydroxy-4-methylpentanoate (2-isopropylmalate). The sequence is that of 2-isopropylmalate synthase from Prochlorococcus marinus (strain AS9601).